The chain runs to 519 residues: 2-isopropylmalate synthase (519 aa).

Positions 5-267 (VIIFDTTLRD…TTNVNPMEIS (263 aa)) constitute a Pyruvate carboxyltransferase domain. The Mn(2+) site is built by D14, H202, H204, and N238. Positions 392–519 (RLESINVQSG…KEQLIHIDQV (128 aa)) are regulatory domain.

It belongs to the alpha-IPM synthase/homocitrate synthase family. LeuA type 1 subfamily. As to quaternary structure, homodimer. Mn(2+) serves as cofactor.

It is found in the cytoplasm. The enzyme catalyses 3-methyl-2-oxobutanoate + acetyl-CoA + H2O = (2S)-2-isopropylmalate + CoA + H(+). It participates in amino-acid biosynthesis; L-leucine biosynthesis; L-leucine from 3-methyl-2-oxobutanoate: step 1/4. Catalyzes the condensation of the acetyl group of acetyl-CoA with 3-methyl-2-oxobutanoate (2-ketoisovalerate) to form 3-carboxy-3-hydroxy-4-methylpentanoate (2-isopropylmalate). This Psychromonas ingrahamii (strain DSM 17664 / CCUG 51855 / 37) protein is 2-isopropylmalate synthase.